Here is a 429-residue protein sequence, read N- to C-terminus: MATEQRPFHLVVFGASGFTGQFVTEEVAREQIASEQSSRLPWAVAGRSKEKLQQVLEKAAQKLGRPSLSSEVGVIICDISNPASLDEMAKQAKLVLNCVGPYRFYGEPVVKACIENGTSCIDICGEPQFLELMHAKYHEKAAEKGVYIIGSSGFDSIPADLGVLYTRNQMNGTLTAVESFLTINTGPEGLCIHDGTWKSAIYGFGDKGSLRKLRSVSCLKPVPIVGTKLKRRWPVSYCRELNSYSIPFLGSDISVVKRTQRYLHENLEDSPVQYAAYVTVGGITSVIKLMFAGLFFLFFVKFSIGRQLLIKFPWLFSFGYFSKQGPTQKQMDETSFTMTFFGQGYSHGTCVEKNKPNIRICTQVKGPEAGYVATPIAMVQAAMTFLSDASDLPKGGGVFTPGAAFSRTKLIDRLNKHGIEFSVISSSEV.

Position 2 is an N-acetylalanine (A2). Phosphoserine occurs at positions 209, 215, and 217.

It belongs to the saccharopine dehydrogenase family.

The protein is Saccharopine dehydrogenase-like oxidoreductase (Sccpdh) of Mus musculus (Mouse).